The following is a 422-amino-acid chain: Tryptophan synthase beta chain (422 aa).

Residue lysine 87 is modified to N6-(pyridoxal phosphate)lysine.

This sequence belongs to the TrpB family. Tetramer of two alpha and two beta chains. Pyridoxal 5'-phosphate is required as a cofactor.

It carries out the reaction (1S,2R)-1-C-(indol-3-yl)glycerol 3-phosphate + L-serine = D-glyceraldehyde 3-phosphate + L-tryptophan + H2O. Its pathway is amino-acid biosynthesis; L-tryptophan biosynthesis; L-tryptophan from chorismate: step 5/5. Functionally, the beta subunit is responsible for the synthesis of L-tryptophan from indole and L-serine. This Haloferax volcanii (strain ATCC 29605 / DSM 3757 / JCM 8879 / NBRC 14742 / NCIMB 2012 / VKM B-1768 / DS2) (Halobacterium volcanii) protein is Tryptophan synthase beta chain (trpB).